The following is a 384-amino-acid chain: D-alanine--D-alanine ligase (384 aa).

Positions 167–374 (KKLFAAEGLP…YPTLLATMVD (208 aa)) constitute an ATP-grasp domain. 195–250 (CERLSLPVFVKPARGGSSIGISRVSSWGQLPSAIAYARRHDPKVIVEAAVNGRELE) provides a ligand contact to ATP. Mg(2+) is bound by residues Asp-329, Glu-341, and Asn-343.

The protein belongs to the D-alanine--D-alanine ligase family. Requires Mg(2+) as cofactor. Mn(2+) is required as a cofactor.

It is found in the cytoplasm. The catalysed reaction is 2 D-alanine + ATP = D-alanyl-D-alanine + ADP + phosphate + H(+). Its pathway is cell wall biogenesis; peptidoglycan biosynthesis. Cell wall formation. The protein is D-alanine--D-alanine ligase of Mycobacterium leprae (strain TN).